Consider the following 41-residue polypeptide: Large ribosomal subunit protein bL36 (41 aa).

The protein belongs to the bacterial ribosomal protein bL36 family.

In Rhizobium rhizogenes (strain K84 / ATCC BAA-868) (Agrobacterium radiobacter), this protein is Large ribosomal subunit protein bL36.